The primary structure comprises 479 residues: Beta-monoglucosyldiacylglycerol synthase (479 aa).

4 consecutive transmembrane segments (helical) span residues 48–68, 363–383, 389–409, and 428–448; these read AAVM…WVWG, FLLM…MALW, LLTP…YYGL, and LART…MPAV.

This sequence belongs to the glycosyltransferase 2 family. Mg(2+) is required as a cofactor.

It localises to the membrane. The enzyme catalyses a 1,2-diacyl-sn-glycerol + UDP-alpha-D-glucose = a 1,2-diacyl-3-O-(beta-D-glucopyranosyl)-sn-glycerol + UDP + H(+). Functionally, glucosyltransferase involved in the biosynthesis of the non-bilayer-forming membrane lipid beta-monoglucosyldiacylglycerol which contributes to regulate the properties and stability of the membrane. Catalyzes the transfer of a glucosyl residue from UDP-Glc to diacylglycerol (DAG) acceptor to form the corresponding beta-glucosyl-DAG (1,2-diacyl-3-O-(beta-D-glucopyranosyl)-sn-glycerol). It can only use UDP-Glc as sugar donor. Two types of DAG (dipalmitoyl-DAG (DPDAG) and 1-oleoyl-2-palmitoyl-DAG (OPDAG)) can be used as sugar acceptors, but OPDAG is preferred. This chain is Beta-monoglucosyldiacylglycerol synthase, found in Synechocystis sp. (strain ATCC 27184 / PCC 6803 / Kazusa).